Reading from the N-terminus, the 376-residue chain is Phosphoglycerate kinase (376 aa).

(2R)-3-phosphoglycerate-binding residues include Val1, Asp2, Phe3, Asn4, Arg17, Ser40, His41, Gly43, Arg44, Leu99, Arg100, His147, and Arg148. Gly191 serves as a coordination point for ADP. Gly191 is a binding site for CDP. Ala192 and Lys193 together coordinate AMP. Ala192 serves as a coordination point for ATP. Mg(2+) is bound at residue Ala192. Asp196 is a CDP binding site. Mg(2+) is bound at residue Asp196. Lys197 provides a ligand contact to AMP. Lys197 lines the ATP pocket. ADP is bound at residue Gly215. Gly215 is a binding site for CDP. Residues Gly216 and Gly290 each contribute to the AMP site. Residues Gly216 and Gly290 each contribute to the ATP site. Residues Gly315 and Phe320 each contribute to the CDP site. An ADP-binding site is contributed by Phe320. Glu321 is a binding site for AMP. ATP is bound by residues Glu321, Asp352, and Thr353. Asp352 is a Mg(2+) binding site.

This sequence belongs to the phosphoglycerate kinase family. Monomer. It depends on Mg(2+) as a cofactor.

The catalysed reaction is (2R)-3-phosphoglycerate + ATP = (2R)-3-phospho-glyceroyl phosphate + ADP. It participates in carbohydrate degradation; glycolysis; pyruvate from D-glyceraldehyde 3-phosphate: step 2/5. This is Phosphoglycerate kinase (PGK) from Glaucoma chattoni.